The sequence spans 817 residues: CD177 antigen (817 aa).

Positions 1 to 21 (MNSIPVLTLLGVTALLPCVPA) are cleaved as a signal peptide. At 22–796 (LTCQKSSAQA…PSLAWTLRLS (775 aa)) the chain is on the extracellular side. N-linked (GlcNAc...) asparagine glycans are attached at residues Asn115, Asn189, Asn379, and Asn566. 4 consecutive UPAR/Ly6 domains span residues 134-203 (CPLC…SENC), 322-393 (CRHC…REDC), 511-581 (CPLC…ERCS), and 705-774 (CPMC…AEES). The helical; Anchor for type IV membrane protein transmembrane segment at 797–817 (AWMLGLSALLSSLYAGICPLC) threads the bilayer.

As to quaternary structure, found in a complex with integrin ITGAM/CD11b and ITGB2/CD18. Interacts with PECAM1 (via Ig-like C2-type domain 6); the interaction is Ca(2+)-dependent; the interaction is direct. Interacts with serine protease PRTN3/myeloblastin; the interaction tethers PRTN3 to the cell surface; the interaction is direct. Expressed in neutrophils.

It localises to the cell membrane. Its function is as follows. In association with beta-2 integrin heterodimer ITGAM/CD11b and ITGB2/CD18, mediates activation of TNF-alpha primed neutrophils including degranulation and superoxide production. In addition, by preventing beta-2 integrin internalization and attenuating chemokine signaling favors adhesion over migration. Heterophilic interaction with PECAM1 on endothelial cells plays a role in neutrophil transendothelial migration in vitro. However, appears to be dispensable for neutrophil recruitment caused by bacterial infection in vivo. Acts as a receptor for the mature form of protease PRTN3 allowing its display at the cell surface of neutrophils. By displaying PRTN3 at the neutrophil cell surface, may play a role in enhancing endothelial cell junctional integrity and thus vascular integrity during neutrophil diapedesis. This chain is CD177 antigen (Cd177), found in Mus musculus (Mouse).